The chain runs to 121 residues: Large ribosomal subunit protein bL12 (121 aa).

Belongs to the bacterial ribosomal protein bL12 family. As to quaternary structure, homodimer. Part of the ribosomal stalk of the 50S ribosomal subunit. Forms a multimeric L10(L12)X complex, where L10 forms an elongated spine to which 2 to 4 L12 dimers bind in a sequential fashion. Binds GTP-bound translation factors.

Forms part of the ribosomal stalk which helps the ribosome interact with GTP-bound translation factors. Is thus essential for accurate translation. The sequence is that of Large ribosomal subunit protein bL12 from Acinetobacter baylyi (strain ATCC 33305 / BD413 / ADP1).